We begin with the raw amino-acid sequence, 95 residues long: Aspartyl/glutamyl-tRNA(Asn/Gln) amidotransferase subunit C (95 aa).

This sequence belongs to the GatC family. In terms of assembly, heterotrimer of A, B and C subunits.

It catalyses the reaction L-glutamyl-tRNA(Gln) + L-glutamine + ATP + H2O = L-glutaminyl-tRNA(Gln) + L-glutamate + ADP + phosphate + H(+). The enzyme catalyses L-aspartyl-tRNA(Asn) + L-glutamine + ATP + H2O = L-asparaginyl-tRNA(Asn) + L-glutamate + ADP + phosphate + 2 H(+). Allows the formation of correctly charged Asn-tRNA(Asn) or Gln-tRNA(Gln) through the transamidation of misacylated Asp-tRNA(Asn) or Glu-tRNA(Gln) in organisms which lack either or both of asparaginyl-tRNA or glutaminyl-tRNA synthetases. The reaction takes place in the presence of glutamine and ATP through an activated phospho-Asp-tRNA(Asn) or phospho-Glu-tRNA(Gln). This is Aspartyl/glutamyl-tRNA(Asn/Gln) amidotransferase subunit C from Rhodopseudomonas palustris (strain TIE-1).